The sequence spans 142 residues: Large-conductance mechanosensitive channel (142 aa).

2 consecutive transmembrane segments (helical) span residues 14 to 34 and 86 to 106; these read VVDL…VSSL and FGQF…VFLV.

The protein belongs to the MscL family. In terms of assembly, homopentamer.

Its subcellular location is the cell inner membrane. Its function is as follows. Channel that opens in response to stretch forces in the membrane lipid bilayer. May participate in the regulation of osmotic pressure changes within the cell. The protein is Large-conductance mechanosensitive channel of Rhizorhabdus wittichii (strain DSM 6014 / CCUG 31198 / JCM 15750 / NBRC 105917 / EY 4224 / RW1) (Sphingomonas wittichii).